A 442-amino-acid chain; its full sequence is Prenyltransferase nscD (442 aa).

The protein belongs to the tryptophan dimethylallyltransferase family.

The protein operates within secondary metabolite biosynthesis. In terms of biological role, prenyltransferase; part of the gene cluster that mediates the biosynthesis of neosartoricin B, a prenylated anthracenone that probably exhibits T-cell antiproliferative activity, suggestive of a physiological role as an immunosuppressive agent. The non-reducing polyketide synthase nscA probably synthesizes and cyclizes the decaketide backbone. The hydrolase nscB then mediates the product release through hydrolysis followed by spontaneous decarboxylation. The prenyltransferase nscD catalyzes the addition of the dimethylallyl group to the aromatic C5. The FAD-dependent monooxygenase nscC is then responsible for the stereospecific hydroxylation at C2. Neosartoricin B can be converted into two additional compounds neosartoricins C and D. Neosartoricin C is a spirocyclic compound that is cyclized through the attack of C3 hydroxyl on C14, followed by dehydration. On the other hand, neosartoricin D is a further cyclized compound in which attack of C2 on C14 in neosartoricin C results in the formation of the acetal-containing dioxabicyclo-octanone ring. Both of these compounds are novel and possibly represent related metabolites of the gene cluster. This chain is Prenyltransferase nscD, found in Trichophyton verrucosum (strain HKI 0517).